A 183-amino-acid chain; its full sequence is Holliday junction branch migration complex subunit RuvA (183 aa).

The tract at residues 1 to 63 (MIVGLIGVVE…EDAHLLYGFL (63 aa)) is domain I. The tract at residues 64 to 139 (EESEKILFER…FFIQDENRPA (76 aa)) is domain II. Residue Ala-139 is a region of interest, flexible linker. Residues 139 to 183 (ARNEVFLALESLGFKSAEINPVLKTLKPHLSIEAAIKEALQQLRS) form a domain III region.

This sequence belongs to the RuvA family. Homotetramer. Forms an RuvA(8)-RuvB(12)-Holliday junction (HJ) complex. HJ DNA is sandwiched between 2 RuvA tetramers; dsDNA enters through RuvA and exits via RuvB. An RuvB hexamer assembles on each DNA strand where it exits the tetramer. Each RuvB hexamer is contacted by two RuvA subunits (via domain III) on 2 adjacent RuvB subunits; this complex drives branch migration. In the full resolvosome a probable DNA-RuvA(4)-RuvB(12)-RuvC(2) complex forms which resolves the HJ.

The protein localises to the cytoplasm. The RuvA-RuvB-RuvC complex processes Holliday junction (HJ) DNA during genetic recombination and DNA repair, while the RuvA-RuvB complex plays an important role in the rescue of blocked DNA replication forks via replication fork reversal (RFR). RuvA specifically binds to HJ cruciform DNA, conferring on it an open structure. The RuvB hexamer acts as an ATP-dependent pump, pulling dsDNA into and through the RuvAB complex. HJ branch migration allows RuvC to scan DNA until it finds its consensus sequence, where it cleaves and resolves the cruciform DNA. This chain is Holliday junction branch migration complex subunit RuvA, found in Helicobacter pylori (strain J99 / ATCC 700824) (Campylobacter pylori J99).